Consider the following 802-residue polypeptide: Leucine--tRNA ligase (802 aa).

The 'HIGH' region signature appears at 40-51; the sequence is PYPSGAGLHVGH. Residues 576–580 carry the 'KMSKS' region motif; that stretch reads KMSKS. Position 579 (K579) interacts with ATP.

The protein belongs to the class-I aminoacyl-tRNA synthetase family.

It is found in the cytoplasm. It carries out the reaction tRNA(Leu) + L-leucine + ATP = L-leucyl-tRNA(Leu) + AMP + diphosphate. This chain is Leucine--tRNA ligase, found in Bacillus anthracis (strain A0248).